A 336-amino-acid chain; its full sequence is Ketol-acid reductoisomerase (NADP(+)) (336 aa).

The KARI N-terminal Rossmann domain maps to 1 to 181; the sequence is MKVYYDQDAD…GGGRSGIIET (181 aa). NADP(+) is bound by residues 24–27, Arg47, Ser50, and Ser52; that span reads YGSQ. Residue His107 is part of the active site. Position 133 (Gly133) interacts with NADP(+). The region spanning 182–327 is the KARI C-terminal knotted domain; that stretch reads SFREETETDL…ERLRGMMPWI (146 aa). Asp190, Glu194, Glu226, and Glu230 together coordinate Mg(2+). Position 251 (Ser251) interacts with substrate.

This sequence belongs to the ketol-acid reductoisomerase family. Mg(2+) serves as cofactor.

The catalysed reaction is (2R)-2,3-dihydroxy-3-methylbutanoate + NADP(+) = (2S)-2-acetolactate + NADPH + H(+). It catalyses the reaction (2R,3R)-2,3-dihydroxy-3-methylpentanoate + NADP(+) = (S)-2-ethyl-2-hydroxy-3-oxobutanoate + NADPH + H(+). It participates in amino-acid biosynthesis; L-isoleucine biosynthesis; L-isoleucine from 2-oxobutanoate: step 2/4. The protein operates within amino-acid biosynthesis; L-valine biosynthesis; L-valine from pyruvate: step 2/4. Involved in the biosynthesis of branched-chain amino acids (BCAA). Catalyzes an alkyl-migration followed by a ketol-acid reduction of (S)-2-acetolactate (S2AL) to yield (R)-2,3-dihydroxy-isovalerate. In the isomerase reaction, S2AL is rearranged via a Mg-dependent methyl migration to produce 3-hydroxy-3-methyl-2-ketobutyrate (HMKB). In the reductase reaction, this 2-ketoacid undergoes a metal-dependent reduction by NADPH to yield (R)-2,3-dihydroxy-isovalerate. The polypeptide is Ketol-acid reductoisomerase (NADP(+)) (Halorhodospira halophila (strain DSM 244 / SL1) (Ectothiorhodospira halophila (strain DSM 244 / SL1))).